The primary structure comprises 443 residues: DNA primase DnaG (443 aa).

The 75-residue stretch at 169-243 (DSIIIVEGRA…DIDYVSRAPY (75 aa)) folds into the Toprim domain. Positions 175, 217, and 219 each coordinate Mg(2+).

This sequence belongs to the archaeal DnaG primase family. As to quaternary structure, forms a ternary complex with MCM helicase and DNA. Requires Mg(2+) as cofactor.

It carries out the reaction ssDNA + n NTP = ssDNA/pppN(pN)n-1 hybrid + (n-1) diphosphate.. Functionally, RNA polymerase that catalyzes the synthesis of short RNA molecules used as primers for DNA polymerase during DNA replication. In Methanococcus vannielii (strain ATCC 35089 / DSM 1224 / JCM 13029 / OCM 148 / SB), this protein is DNA primase DnaG.